Consider the following 717-residue polypeptide: SAGA factor-like TAF6 (717 aa).

Positions 123–204 are sufficient for interaction with Taf9; the sequence is KSYAGFDPRS…VPPMLGAMDS (82 aa).

It belongs to the TAF6 family. In terms of assembly, component of the Spt-Ada-Gcn5 acetyltransferase (SAGA) complex consisting of wda/Taf5L, Saf6, Taf9, Taf10b, Taf12, Ada1, Spt3, Spt7, Spt20, Sf3b3, Sf3b5, Nipped-A/Tra1, a histone acetyltransferase (HAT) module made up of Gcn5, Ada2b (Isoform B), Ada3 and Sgf29, and a deubiquitinase (DUB) module made up of not/nonstop, Sgf11 and e(y)2 tethered to SAGA by Atxn7; not essential for SAGA complex assembly, histone-modifying activity or chromosomal recruitment. Interacts (via N-terminal histone-fold domain) with Taf9 (via N-terminal histone-fold domain); the interaction is probably direct. Probably forms a histone-like heterooctamer structure with Taf9, Taf12 and Taf10b.

Its subcellular location is the nucleus. The protein localises to the chromosome. Component of the transcription regulatory complex SAGA, a multiprotein complex that activates transcription by remodeling chromatin and mediating histone acetylation and deubiquitination. The SAGA complex predominantly acetylates histone H3. Involved in SAGA complex coactivator function but not essential for SAGA complex assembly, histone-modifying activity or chromosomal recruitment. Required for oogenesis; involved in transcriptional activation. The polypeptide is SAGA factor-like TAF6 (Drosophila melanogaster (Fruit fly)).